Reading from the N-terminus, the 390-residue chain is Chorismate synthase 2 (390 aa).

Residues arginine 39 and arginine 45 each contribute to the NADP(+) site. Residues 132–134, 253–254, glycine 298, 313–317, and arginine 339 contribute to the FMN site; these read RSS, NA, and KPIPT.

It belongs to the chorismate synthase family. Homotetramer. It depends on FMNH2 as a cofactor.

It carries out the reaction 5-O-(1-carboxyvinyl)-3-phosphoshikimate = chorismate + phosphate. It participates in metabolic intermediate biosynthesis; chorismate biosynthesis; chorismate from D-erythrose 4-phosphate and phosphoenolpyruvate: step 7/7. Catalyzes the anti-1,4-elimination of the C-3 phosphate and the C-6 proR hydrogen from 5-enolpyruvylshikimate-3-phosphate (EPSP) to yield chorismate, which is the branch point compound that serves as the starting substrate for the three terminal pathways of aromatic amino acid biosynthesis. This reaction introduces a second double bond into the aromatic ring system. The sequence is that of Chorismate synthase 2 from Bacillus cereus (strain ATCC 10987 / NRS 248).